A 281-amino-acid chain; its full sequence is Tetraspanin-5 (281 aa).

The Cytoplasmic segment spans residues M1–T7. The helical transmembrane segment at V8–L28 threads the bilayer. Residues W29–P44 are Extracellular-facing. Residues L45–C65 traverse the membrane as a helical segment. Residues D66 to Y74 are Cytoplasmic-facing. The helical transmembrane segment at L75 to V95 threads the bilayer. Residues T96 to S221 lie on the Extracellular side of the membrane. Residues L222 to F242 traverse the membrane as a helical segment. At K243–Y281 the chain is on the cytoplasmic side.

The protein belongs to the tetraspanin (TM4SF) family.

It is found in the membrane. Functionally, may be involved in the regulation of cell differentiation. The chain is Tetraspanin-5 (TET5) from Arabidopsis thaliana (Mouse-ear cress).